We begin with the raw amino-acid sequence, 209 residues long: uncharacterized protein (209 aa).

Residues 1–15 show a composition bias toward basic and acidic residues; that stretch reads MHRIDTKTAQKDKFG. A disordered region spans residues 1–34; that stretch reads MHRIDTKTAQKDKFGAGKNGFTRGNPQTGTPATD. The span at 22-31 shows a compositional bias: polar residues; sequence TRGNPQTGTP.

To E.coli YfdL and M.jannaschii MJ0347.

This is an uncharacterized protein from Escherichia coli (strain K12).